The chain runs to 432 residues: D-amino acid dehydrogenase (432 aa).

An FAD-binding site is contributed by 3-17; sequence VLVLGSGVIGTASAY.

The protein belongs to the DadA oxidoreductase family. The cofactor is FAD.

It carries out the reaction a D-alpha-amino acid + A + H2O = a 2-oxocarboxylate + AH2 + NH4(+). The protein operates within amino-acid degradation; D-alanine degradation; NH(3) and pyruvate from D-alanine: step 1/1. In terms of biological role, oxidative deamination of D-amino acids. This Ectopseudomonas mendocina (strain ymp) (Pseudomonas mendocina) protein is D-amino acid dehydrogenase.